Consider the following 80-residue polypeptide: UPF0154 protein MGAS10270_Spy0296 (80 aa).

The helical transmembrane segment at 4–24 (AIWILLLIVALGVGVFGGIFI) threads the bilayer.

The protein belongs to the UPF0154 family.

It localises to the cell membrane. The polypeptide is UPF0154 protein MGAS10270_Spy0296 (Streptococcus pyogenes serotype M2 (strain MGAS10270)).